The sequence spans 385 residues: Initiation-specific alpha-1,6-mannosyltransferase (385 aa).

Residues 1 to 15 (MLQLREPQMVHKHLK) lie on the Cytoplasmic side of the membrane. A helical; Signal-anchor for type II membrane protein membrane pass occupies residues 16 to 36 (LAVLGIVVIFTTYFIISSLSS). Residues 37 to 385 (PTSTHKTEYN…KDDGMPEMEQ (349 aa)) are Lumenal-facing. The DXD motif motif lies at 189–191 (DID).

The protein belongs to the glycosyltransferase 32 family. The cofactor is Mn(2+).

The protein resides in the endoplasmic reticulum membrane. Its subcellular location is the golgi apparatus membrane. The catalysed reaction is Transfers an alpha-D-mannosyl residue from GDP-mannose into lipid-linked oligosaccharide, forming an alpha-(1-&gt;6)-D-mannosyl-D-mannose linkage.. Functionally, mannosyltransferase involved in outer chain elongation of asparagine-linked oligosaccharides of the type Man(9)GlcNAc(2). Adds the first alpha-1,6-mannose to the Man(8)GlcNAc(2) and Man(9)GlcNAc(2), but not Man(5)GlcNAc(2), endoplasmic reticulum intermediates. Represents the first enzymatic event required for synthesis of outer chain mannose linkages on yeast secretory proteins. N-glycan outer chain epitopes play a crucial role in the host-fungal interaction, virulence, and host immune response such as interleukin synthesis or phagocytosis by neutrophils. This chain is Initiation-specific alpha-1,6-mannosyltransferase, found in Candida albicans (strain SC5314 / ATCC MYA-2876) (Yeast).